The primary structure comprises 346 residues: Phosphoribosylformylglycinamidine cyclo-ligase (346 aa).

Belongs to the AIR synthase family.

It localises to the cytoplasm. The enzyme catalyses 2-formamido-N(1)-(5-O-phospho-beta-D-ribosyl)acetamidine + ATP = 5-amino-1-(5-phospho-beta-D-ribosyl)imidazole + ADP + phosphate + H(+). The protein operates within purine metabolism; IMP biosynthesis via de novo pathway; 5-amino-1-(5-phospho-D-ribosyl)imidazole from N(2)-formyl-N(1)-(5-phospho-D-ribosyl)glycinamide: step 2/2. The sequence is that of Phosphoribosylformylglycinamidine cyclo-ligase from Synechococcus sp. (strain CC9311).